The chain runs to 416 residues: MSGHRSTRKRCGDSHPESPVGFGHMSTTGCVLNKLFQLPTPPLSRHQLKRLEEHRYQSAGRSLLEPLMQGYWEWLVRRVPSWIAPNLITIIGLSINICTTILLVFYCPTATEQAPLWAYIACACGLFIYQSLDAIDGKQARRTNSSSPLGELFDHGCDSLSTVFVVLGTCIAVQLGTNPDWMFFCCFAGTFMFYCAHWQTYVSGTLRFGIIDVTEVQIFIIIMHLLAVIGGPPFWQSMIPVLNIQMKIFPALCTVAGTIFSCTNYFRVIFTGGVGKNGSTIAGTSVLSPFLHIGSVITLAAMIYKKSAVQLFEKHPCLYILTFGFVSAKITNKLVVAHMTKSEMHLHDTAFIGPALLFLDQYFNSFIDEYIVLWIALVFSFFDLIRYCVSVCNQIASHLHIHVFRIKVSTAHSNHH.

The segment at 1 to 20 (MSGHRSTRKRCGDSHPESPV) is disordered. Position 18 is a phosphoserine (Ser-18). The residue at position 40 (Thr-40) is a Phosphothreonine. Position 86 (Asn-86) interacts with CDP-choline. The next 2 membrane-spanning stretches (helical) occupy residues 89-108 (TIIG…FYCP) and 116-133 (LWAY…QSLD). A Mg(2+)-binding site is contributed by Asp-133. Asn-144 is a glycosylation site (N-linked (GlcNAc...) asparagine). Glu-151 provides a ligand contact to CDP-choline. A Mg(2+)-binding site is contributed by Asp-154. The active-site Proton acceptor is His-155. A run of 8 helical transmembrane segments spans residues 156 to 176 (GCDS…VQLG), 180 to 199 (DWMF…AHWQ), 210 to 230 (IIDV…AVIG), 246 to 267 (MKIF…NYFR), 286 to 306 (VLSP…IYKK), 315 to 334 (HPCL…TNKL), 349 to 363 (TAFI…DQYF), and 368 to 388 (DEYI…IRYC). Asp-158 is a Mg(2+) binding site.

It belongs to the CDP-alcohol phosphatidyltransferase class-I family. Homodimer. The cofactor is Mg(2+). Mn(2+) is required as a cofactor. In terms of tissue distribution, ubiquitously expressed.

It localises to the endoplasmic reticulum membrane. Its subcellular location is the nucleus membrane. It carries out the reaction CDP-ethanolamine + a 1,2-diacyl-sn-glycerol = a 1,2-diacyl-sn-glycero-3-phosphoethanolamine + CMP + H(+). It catalyses the reaction CDP-choline + a 1,2-diacyl-sn-glycerol = a 1,2-diacyl-sn-glycero-3-phosphocholine + CMP + H(+). The enzyme catalyses 1-O-alkyl-2-acyl-sn-glycerol + CDP-choline = a 1-O-alkyl-2-acyl-sn-glycero-3-phosphocholine + CMP + H(+). The catalysed reaction is a 1-O-(1Z-alkenyl)-2-acyl-sn-glycerol + CDP-choline = a 1-O-(1Z-alkenyl)-2-acyl-sn-glycero-3-phosphocholine + CMP + H(+). It carries out the reaction 1,2-dioctanoyl-sn-glycerol + CDP-choline = 1,2-dioctanoyl-sn-glycero-3-phosphocholine + CMP + H(+). It catalyses the reaction 1,2-didecanoyl-sn-glycerol + CDP-choline = 1,2-didecanoyl-sn-glycero-3-phosphocholine + CMP + H(+). The enzyme catalyses CDP-choline + 1,2-di-(9Z-octadecenoyl)-sn-glycerol = 1,2-di-(9Z-octadecenoyl)-sn-glycero-3-phosphocholine + CMP + H(+). The catalysed reaction is 1-hexadecanoyl-2-(9Z-octadecenoyl)-sn-glycerol + CDP-choline = 1-hexadecanoyl-2-(9Z-octadecenoyl)-sn-glycero-3-phosphocholine + CMP + H(+). It carries out the reaction CDP-ethanolamine + 1,2-di-(9Z-octadecenoyl)-sn-glycerol = 1,2-di-(9Z-octadecenoyl)-sn-glycero-3-phosphoethanolamine + CMP + H(+). It catalyses the reaction 1-hexadecanoyl-2-(9Z-octadecenoyl)-sn-glycerol + CDP-ethanolamine = 1-hexadecanoyl-2-(9Z-octadecenoyl)-sn-glycero-3-phosphoethanolamine + CMP + H(+). The enzyme catalyses 1-hexadecanoyl-2-(4Z,7Z,10Z,13Z,16Z,19Z-docosahexaenoyl)-sn-glycerol + CDP-choline = 1-hexadecanoyl-2-(4Z,7Z,10Z,13Z,16Z,19Z-docosahexaenoyl)-sn-glycero-3-phosphocholine + CMP + H(+). The catalysed reaction is 1,2-di-(9Z-hexadecenoyl)-sn-glycerol + CDP-choline = 1,2-di-(9Z-hexadecenoyl)-sn-glycero-3-phosphocholine + CMP + H(+). It carries out the reaction 1,2-di-(9Z-hexadecenoyl)-sn-glycerol + CDP-ethanolamine = 1,2-di-(9Z-hexadecenoyl)-sn-glycero-3-phosphoethanolamine + CMP + H(+). It catalyses the reaction 1-O-hexadecyl-2-acetyl-sn-glycerol + CDP-choline = 1-O-hexadecyl-2-acetyl-sn-glycero-3-phosphocholine + CMP + H(+). The enzyme catalyses 1-O-hexadecyl-2-(5Z,8Z,11Z,14Z-eicosatetraenoyl)-sn-glycerol + CDP-choline = 1-O-hexadecyl-2-(5Z,8Z,11Z,14Z)-eicosatetraenoyl-sn-glycero-3-phosphocholine + CMP + H(+). Its pathway is phospholipid metabolism; phosphatidylethanolamine biosynthesis; phosphatidylethanolamine from ethanolamine: step 3/3. It participates in phospholipid metabolism; phosphatidylcholine biosynthesis; phosphatidylcholine from phosphocholine: step 2/2. Functionally, catalyzes both phosphatidylcholine and phosphatidylethanolamine biosynthesis from CDP-choline and CDP-ethanolamine, respectively. Involved in protein-dependent process of phospholipid transport to distribute phosphatidyl choline to the lumenal surface. Has a higher cholinephosphotransferase activity than ethanolaminephosphotransferase activity. This is Choline/ethanolaminephosphotransferase 1 from Homo sapiens (Human).